The primary structure comprises 296 residues: Thymidylate synthase (296 aa).

DUMP is bound by residues R24 and 151–152 (RR). C171 acts as the Nucleophile in catalysis. Residues 197-200 (RSAD), N208, and 238-240 (HVY) each bind dUMP. D200 is a binding site for (6R)-5,10-methylene-5,6,7,8-tetrahydrofolate.

It belongs to the thymidylate synthase family. In terms of assembly, homodimer.

It catalyses the reaction dUMP + (6R)-5,10-methylene-5,6,7,8-tetrahydrofolate = 7,8-dihydrofolate + dTMP. It functions in the pathway pyrimidine metabolism; dTTP biosynthesis. The chain is Thymidylate synthase (tms1) from Agaricus bisporus (White button mushroom).